The following is a 60-amino-acid chain: uncharacterized protein (60 aa).

This is an uncharacterized protein from Autographa californica nuclear polyhedrosis virus (AcMNPV).